The sequence spans 234 residues: Probable chemoreceptor glutamine deamidase CheD 1 (234 aa).

The interval 183–234 (AREAAGPRGERAARARPRVELFGTPAPKAQATPRIELFGTRATQPATRKQEA) is disordered. The span at 190 to 201 (RGERAARARPRV) shows a compositional bias: basic and acidic residues. Polar residues predominate over residues 223-234 (RATQPATRKQEA).

This sequence belongs to the CheD family.

The enzyme catalyses L-glutaminyl-[protein] + H2O = L-glutamyl-[protein] + NH4(+). Probably deamidates glutamine residues to glutamate on methyl-accepting chemotaxis receptors (MCPs), playing an important role in chemotaxis. The polypeptide is Probable chemoreceptor glutamine deamidase CheD 1 (Burkholderia thailandensis (strain ATCC 700388 / DSM 13276 / CCUG 48851 / CIP 106301 / E264)).